The chain runs to 337 residues: Nucleotide sugar transporter SLC35D2 (337 aa).

Residues 1–27 lie on the Cytoplasmic side of the membrane; sequence MTAGGQAEAEGAGGEPGAARLPSRVAR. Residues 28–48 traverse the membrane as a helical segment; it reads LLSALFYGTCSFLIVLVNKAL. Residues 49 to 53 are Extracellular-facing; it reads LTTYG. The helical transmembrane segment at 54-74 threads the bilayer; that stretch reads FPSPIFLGIGQMAATIMILYV. Residues 75 to 146 lie on the Cytoplasmic side of the membrane; sequence SKLNKIIHFP…IILGKQYSLN (72 aa). Helical transmembrane passes span 147 to 167 and 168 to 188; these read IILSVFAIILGAFIAAGSDLA and FNLEGYIFVFLNDIFTAANGV. At 189–201 the chain is on the cytoplasmic side; that stretch reads YTKQKMDPKELGK. The helical transmembrane segment at 202 to 222 threads the bilayer; the sequence is YGVLFYNACFMIIPTLIISVS. Residues 223–237 are Extracellular-facing; it reads TGDLQQATEFNQWKN. A helical membrane pass occupies residues 238–258; that stretch reads VVFILQFLLSCFLGFLLMYST. Topologically, residues 259 to 265 are cytoplasmic; that stretch reads VLCSYYN. Residues 266–288 form a helical membrane-spanning segment; that stretch reads SALTTAVVGAIKNVSVAYIGILI. Residues 289–292 lie on the Extracellular side of the membrane; that stretch reads GGDY. A helical membrane pass occupies residues 293–315; it reads IFSLLNFVGLNICMAGGLRYSFL. At 316–337 the chain is on the cytoplasmic side; sequence TLSSQLKPKPVGEENICLDLKS.

It belongs to the TPT transporter family. SLC35D subfamily. As to expression, highly expressed in heart, kidney, small intestine, placenta, lung and peripheral blood leukocyte. Weakly expressed in skeletal muscle and spleen. Not expressed in brain, colon and thymus.

Its subcellular location is the golgi apparatus membrane. It carries out the reaction UMP(out) + UDP-N-acetyl-alpha-D-glucosamine(in) = UMP(in) + UDP-N-acetyl-alpha-D-glucosamine(out). The catalysed reaction is UMP(out) + UDP-alpha-D-glucose(in) = UMP(in) + UDP-alpha-D-glucose(out). In terms of biological role, nucleotide sugar antiporter transporting UDP-N-acetylglucosamine (UDP-GlcNAc) and UDP-glucose (UDP-Glc) from the cytosol into the lumen of the Golgi in exchange of UMP. By supplying UDP-N-acetylglucosamine, a donor substrate to heparan sulfate synthases, probably takes part in the synthesis of these glycoconjugates. The polypeptide is Nucleotide sugar transporter SLC35D2 (Homo sapiens (Human)).